The sequence spans 869 residues: Mismatch repair endonuclease PMS2 (869 aa).

Positions 44, 69, 108, 109, and 110 each coordinate ATP. The Nuclear localization signal signature appears at 585 to 588 (RRFK).

It belongs to the DNA mismatch repair MutL/HexB family.

Its subcellular location is the nucleus. The enzyme catalyses ATP + H2O = ADP + phosphate + H(+). Component of the post-replicative DNA mismatch repair system (MMR). Involved in B cell growth by positively regulating B cell proliferation and controlling replication efficiency. Controls cell cycle to prevent re-replication and defects in DNA damage-induced G2 checkpoint. Doesn't seem to counteract or control the immunoglobulin gene conversion (Ig GC) and to contribute to guanine/uracil mismatch repair. Possesses an ATPase activity, but in the absence of gross structural changes, ATP hydrolysis may not be necessary for proficient mismatch repair. In Gallus gallus (Chicken), this protein is Mismatch repair endonuclease PMS2.